Reading from the N-terminus, the 148-residue chain is UPF0756 membrane protein NGK_2061 (148 aa).

Transmembrane regions (helical) follow at residues Leu10 to Leu32, His50 to Gly70, Met85 to Leu105, and Leu116 to Ile136.

The protein belongs to the UPF0756 family.

It localises to the cell membrane. This Neisseria gonorrhoeae (strain NCCP11945) protein is UPF0756 membrane protein NGK_2061.